A 1622-amino-acid chain; its full sequence is FK506-binding protein 5 (1622 aa).

The 92-residue stretch at 178–269 (GDRVSIKYAG…IFDLEVTGSK (92 aa)) folds into the PPIase FKBP-type domain. A disordered region spans residues 268-306 (SKKKEGSEPSLPSLNGQPSNAPQQSLPTQLFDNSPVPQD). A compositionally biased stretch (polar residues) spans 277–303 (SLPSLNGQPSNAPQQSLPTQLFDNSPV). An Omega-N-methylarginine modification is found at arginine 314. 2 disordered regions span residues 320 to 432 (RATG…GFNN) and 518 to 538 (SPPPPVQQAPPPTPAPAPPPP). Residues 335 to 432 (ESNSRNSHSN…NMNNNNGFNN (98 aa)) show a composition bias toward low complexity. Coiled coils occupy residues 607–827 (LVQT…ETER) and 854–961 (KKEE…LESQ). Disordered regions lie at residues 1043–1097 (KQQQ…EVVV) and 1122–1622 (EEVK…VLPL). Acidic residues-rich tracts occupy residues 1050 to 1093 (KEEE…EEEK) and 1152 to 1168 (DDEDDDDDEDDYDDINE). Over residues 1169-1182 (EDLKNIDAEIEKMQ) the composition is skewed to basic and acidic residues. Acidic residues-rich tracts occupy residues 1185-1199 (MGDELEDDDDEEEEK) and 1222-1260 (ESEEEEEEETKVEVPVLEEEKEEEETKVEVPVLEDEQED). The segment covering 1261-1271 (KVESDVEEKIV) has biased composition (basic and acidic residues). Residues 1320–1335 (DDDEDNEKDVASDSEE) are compositionally biased toward acidic residues. The segment covering 1353–1369 (EEKVVEQVKEEINETKF) has biased composition (basic and acidic residues). A compositionally biased stretch (acidic residues) spans 1380 to 1412 (TTTEEKEEEKEEEKVEEEEEKVVEPPTIDDDET). Composition is skewed to low complexity over residues 1435 to 1449 (STTAATTSTTTTSST) and 1465 to 1504 (KTSFFDFDDSPFSAETETETKSTAASSDPFADTTSSTPTS). 2 stretches are compositionally biased toward polar residues: residues 1519 to 1532 (FGNSSDIFDKPSTT) and 1581 to 1609 (AKSNNNTPSRQKQDFSSLFGSDPTISPLT).

This sequence belongs to the FKBP-type PPIase family.

The catalysed reaction is [protein]-peptidylproline (omega=180) = [protein]-peptidylproline (omega=0). Its activity is regulated as follows. Inhibited by both FK506 and rapamycin. In terms of biological role, PPIases accelerate the folding of proteins by catalyzing the cis-trans isomerization of proline imidic peptide bonds in oligopeptides. In Dictyostelium discoideum (Social amoeba), this protein is FK506-binding protein 5 (fkbp5).